The chain runs to 644 residues: Macrolide export ATP-binding/permease protein MacB (644 aa).

The Cytoplasmic segment spans residues Met-1–Ser-268. The region spanning Ile-4 to Arg-242 is the ABC transporter domain. Gly-40–Ser-47 is a binding site for ATP. A helical transmembrane segment spans residues Leu-269–Gly-289. Over Asn-290–Ser-523 the chain is Periplasmic. The helical transmembrane segment at Ile-524–Val-544 threads the bilayer. Over Thr-545–Val-573 the chain is Cytoplasmic. A helical transmembrane segment spans residues Leu-574–Phe-594. Over Asn-595–Thr-607 the chain is Periplasmic. A helical membrane pass occupies residues Ala-608–Pro-628. Residues Ala-629–Glu-644 are Cytoplasmic-facing.

This sequence belongs to the ABC transporter superfamily. Macrolide exporter (TC 3.A.1.122) family. In terms of assembly, homodimer. Part of the tripartite efflux system MacAB-TdeA, which is composed of an inner membrane transporter, MacB, a periplasmic membrane fusion protein, MacA, and an outer membrane component, TdeA. The complex forms a large protein conduit and can translocate molecules across both the inner and outer membranes. Interacts with MacA.

The protein resides in the cell inner membrane. Part of the tripartite efflux system MacAB-TdeA. MacB is a non-canonical ABC transporter that contains transmembrane domains (TMD), which form a pore in the inner membrane, and an ATP-binding domain (NBD), which is responsible for energy generation. Confers resistance against macrolides. In Aggregatibacter actinomycetemcomitans (Actinobacillus actinomycetemcomitans), this protein is Macrolide export ATP-binding/permease protein MacB.